The following is a 272-amino-acid chain: Putative phosphoenolpyruvate synthase regulatory protein (272 aa).

152 to 159 (GVSRCGKT) is a binding site for ADP.

This sequence belongs to the pyruvate, phosphate/water dikinase regulatory protein family. PSRP subfamily.

It catalyses the reaction [pyruvate, water dikinase] + ADP = [pyruvate, water dikinase]-phosphate + AMP + H(+). The catalysed reaction is [pyruvate, water dikinase]-phosphate + phosphate + H(+) = [pyruvate, water dikinase] + diphosphate. Its function is as follows. Bifunctional serine/threonine kinase and phosphorylase involved in the regulation of the phosphoenolpyruvate synthase (PEPS) by catalyzing its phosphorylation/dephosphorylation. This is Putative phosphoenolpyruvate synthase regulatory protein from Pseudomonas putida (strain GB-1).